The sequence spans 580 residues: Amino-acid acetyltransferase, mitochondrial (580 aa).

Residues 403–560 enclose the N-acetyltransferase domain; the sequence is LTMQNLFDDK…KLRHQNGVVD (158 aa).

Belongs to the acetyltransferase family.

Its subcellular location is the mitochondrion. It carries out the reaction L-glutamate + acetyl-CoA = N-acetyl-L-glutamate + CoA + H(+). It participates in amino-acid biosynthesis; L-arginine biosynthesis; N(2)-acetyl-L-ornithine from L-glutamate: step 1/4. N-acetylglutamate synthase involved in arginine biosynthesis. The chain is Amino-acid acetyltransferase, mitochondrial (ARG2) from Candida albicans (strain SC5314 / ATCC MYA-2876) (Yeast).